A 151-amino-acid polypeptide reads, in one-letter code: 3-dehydroquinate dehydratase (151 aa).

Residue Y24 is the Proton acceptor of the active site. N76, H82, and D89 together coordinate substrate. H102 functions as the Proton donor in the catalytic mechanism. Residues 103–104 (VS) and R113 each bind substrate.

This sequence belongs to the type-II 3-dehydroquinase family. Homododecamer.

The enzyme catalyses 3-dehydroquinate = 3-dehydroshikimate + H2O. The protein operates within metabolic intermediate biosynthesis; chorismate biosynthesis; chorismate from D-erythrose 4-phosphate and phosphoenolpyruvate: step 3/7. Functionally, catalyzes a trans-dehydration via an enolate intermediate. The chain is 3-dehydroquinate dehydratase from Rhodopseudomonas palustris (strain TIE-1).